The chain runs to 306 residues: Protein SULFUR DEFICIENCY-INDUCED 1 (306 aa).

5 TPR repeats span residues 1-22, 71-104, 107-140, 167-200, and 202-233; these read MERSLKKTKNNYNNSIKSNLMK, DSALKDMAVVMKQLDRSEEAIEAIKSFRPRCSKN, DSLDNVLIDLYKKCGRMEEQVELLKRKLRQIYQG, SRLLGNLGWAYMQQAKYLSAEAVYRKAQMVEPDA, and KSCNLAMCLIKQGRFEEGRLVLDDVLEYRVLG. Residues 72-139 adopt a coiled-coil conformation; that stretch reads SALKDMAVVM…LKRKLRQIYQ (68 aa). The stretch at 238-260 forms a coiled coil; sequence RTRQRAEELLSELESSLPRMRDA. The stretch at 270 to 304 is one TPR 6 repeat; it reads LDDDFVLGLEEMTSTSFKSKRLPIFEQISSFRNTL.

Belongs to the MS5 protein family.

The protein localises to the nucleus. Functionally, involved in the utilization of stored sulfate under sulfur-deficient conditions. The sequence is that of Protein SULFUR DEFICIENCY-INDUCED 1 from Arabidopsis thaliana (Mouse-ear cress).